The chain runs to 198 residues: tRNA (pseudouridine(54)-N(1))-methyltransferase (198 aa).

Residues Leu130, Gly153, 176-181 (LSPLEL), and Cys186 each bind S-adenosyl-L-methionine.

Belongs to the methyltransferase superfamily. TrmY family. Homodimer.

The protein resides in the cytoplasm. The catalysed reaction is pseudouridine(54) in tRNA + S-adenosyl-L-methionine = N(1)-methylpseudouridine(54) in tRNA + S-adenosyl-L-homocysteine + H(+). Its function is as follows. Specifically catalyzes the N1-methylation of pseudouridine at position 54 (Psi54) in tRNAs. This Methanococcus vannielii (strain ATCC 35089 / DSM 1224 / JCM 13029 / OCM 148 / SB) protein is tRNA (pseudouridine(54)-N(1))-methyltransferase.